A 446-amino-acid polypeptide reads, in one-letter code: Tubulin beta-2 chain (446 aa).

GTP-binding residues include Gln-11, Glu-69, Ser-138, Gly-142, Thr-143, Gly-144, Asn-204, and Asn-226. Glu-69 lines the Mg(2+) pocket. The segment at 424–446 is disordered; sequence QYQEATADEEGEFDEDEEGGGDE. The segment covering 429-446 has biased composition (acidic residues); it reads TADEEGEFDEDEEGGGDE.

It belongs to the tubulin family. As to quaternary structure, dimer of alpha and beta chains. A typical microtubule is a hollow water-filled tube with an outer diameter of 25 nm and an inner diameter of 15 nM. Alpha-beta heterodimers associate head-to-tail to form protofilaments running lengthwise along the microtubule wall with the beta-tubulin subunit facing the microtubule plus end conferring a structural polarity. Microtubules usually have 13 protofilaments but different protofilament numbers can be found in some organisms and specialized cells. Requires Mg(2+) as cofactor. As to expression, testis specific.

It localises to the cytoplasm. The protein localises to the cytoskeleton. Tubulin is the major constituent of microtubules, a cylinder consisting of laterally associated linear protofilaments composed of alpha- and beta-tubulin heterodimers. Microtubules grow by the addition of GTP-tubulin dimers to the microtubule end, where a stabilizing cap forms. Below the cap, tubulin dimers are in GDP-bound state, owing to GTPase activity of alpha-tubulin. The sequence is that of Tubulin beta-2 chain (betaTub85D) from Drosophila melanogaster (Fruit fly).